A 268-amino-acid polypeptide reads, in one-letter code: GTP cyclohydrolase III (268 aa).

Belongs to the archaeal-type GTP cyclohydrolase family. In terms of assembly, homotrimer. The cofactor is Mg(2+).

The enzyme catalyses GTP + 3 H2O = 2-amino-5-formylamino-6-(5-phospho-D-ribosylamino)pyrimidin-4(3H)-one + 2 phosphate + 2 H(+). Functionally, catalyzes the formation of 2-amino-5-formylamino-6-ribofuranosylamino-4(3H)-pyrimidinone ribonucleotide monophosphate and inorganic phosphate from GTP. Also has an independent pyrophosphate phosphohydrolase activity. The polypeptide is GTP cyclohydrolase III (gch3) (Methanocaldococcus jannaschii (strain ATCC 43067 / DSM 2661 / JAL-1 / JCM 10045 / NBRC 100440) (Methanococcus jannaschii)).